The sequence spans 626 residues: E3 ubiquitin-protein ligase CHFR (626 aa).

The FHA domain occupies 34–85 (WTIGRKKACDLSFPGNKLVSGEHCKITVNEESGSVSLEDTSTNGTVINKLKV). Polar residues-rich tracts occupy residues 123 to 133 (EDSMQNPADTS) and 140 to 149 (TQTLSSQDDQ). Disordered regions lie at residues 123–170 (EDSM…TPTT) and 188–229 (PGVQ…MRTE). The segment covering 158–170 (STSTSSLFSTPTT) has biased composition (low complexity). A compositionally biased stretch (basic and acidic residues) spans 194–203 (SGEKSGESLE). The segment at 267-306 (CIICQELLHDCVSLQPCMHTFCAACYSGWMERSSLCPTCR) adopts an RING-type zinc-finger fold. Disordered stretches follow at residues 351 to 387 (DMLQPKVRRSFSDEEGSSEDLLELSDVDSESSDISQP) and 402 to 428 (IQPPPYPPPSDTEASRTQGDAPSTSTN). The segment covering 363–381 (DEEGSSEDLLELSDVDSES) has biased composition (acidic residues). Residues 416–428 (SRTQGDAPSTSTN) show a composition bias toward polar residues. The PBZ-type zinc-finger motif lies at 595 to 617 (PNCYWGRNCRTQVKAHHAMKFNH).

It belongs to the CHFR family.

Its subcellular location is the nucleus. It is found in the PML body. The catalysed reaction is S-ubiquitinyl-[E2 ubiquitin-conjugating enzyme]-L-cysteine + [acceptor protein]-L-lysine = [E2 ubiquitin-conjugating enzyme]-L-cysteine + N(6)-ubiquitinyl-[acceptor protein]-L-lysine.. Its pathway is protein modification; protein ubiquitination. E3 ubiquitin-protein ligase that functions in the antephase checkpoint by actively delaying passage into mitosis in response to microtubule poisons. Acts in early prophase before chromosome condensation, when the centrosome move apart from each other along the periphery of the nucleus. Probably involved in signaling the presence of mitotic stress caused by microtubule poisons by mediating the 'Lys-48'-linked ubiquitination of target proteins, leading to their degradation by the proteasome. May also promote the formation of 'Lys-63'-linked polyubiquitin chains and functions with the specific ubiquitin-conjugating ubc13-mms2 (ube2n-ube2v2) heterodimer. Substrates that are polyubiquitinated at 'Lys-63' are usually not targeted for degradation, but are rather involved in signaling cellular stress. The chain is E3 ubiquitin-protein ligase CHFR (chfr) from Xenopus tropicalis (Western clawed frog).